The chain runs to 200 residues: ATP-dependent Clp protease proteolytic subunit 1 (200 aa).

The active-site Nucleophile is Ser98. His123 is a catalytic residue.

This sequence belongs to the peptidase S14 family. As to quaternary structure, fourteen ClpP subunits assemble into 2 heptameric rings which stack back to back to give a disk-like structure with a central cavity, resembling the structure of eukaryotic proteasomes.

The protein resides in the cytoplasm. It carries out the reaction Hydrolysis of proteins to small peptides in the presence of ATP and magnesium. alpha-casein is the usual test substrate. In the absence of ATP, only oligopeptides shorter than five residues are hydrolyzed (such as succinyl-Leu-Tyr-|-NHMec, and Leu-Tyr-Leu-|-Tyr-Trp, in which cleavage of the -Tyr-|-Leu- and -Tyr-|-Trp bonds also occurs).. Cleaves peptides in various proteins in a process that requires ATP hydrolysis. Has a chymotrypsin-like activity. Plays a major role in the degradation of misfolded proteins. The chain is ATP-dependent Clp protease proteolytic subunit 1 from Mycobacterium bovis (strain ATCC BAA-935 / AF2122/97).